Reading from the N-terminus, the 396-residue chain is Elongation factor Tu (396 aa).

A tr-type G domain is found at 10–206 (KPHCNIGTIG…QVDAYIPQPE (197 aa)). The G1 stretch occupies residues 19–26 (GHVDHGKT). GTP is bound at residue 19-26 (GHVDHGKT). Residue Thr26 coordinates Mg(2+). A G2 region spans residues 60–64 (GITIS). Residues 81 to 84 (DCPG) form a G3 region. GTP-binding positions include 81–85 (DCPGH) and 136–139 (NKCD). The G4 stretch occupies residues 136–139 (NKCD). Residues 174-176 (SAL) form a G5 region.

Belongs to the TRAFAC class translation factor GTPase superfamily. Classic translation factor GTPase family. EF-Tu/EF-1A subfamily. Monomer.

It is found in the cytoplasm. The catalysed reaction is GTP + H2O = GDP + phosphate + H(+). In terms of biological role, GTP hydrolase that promotes the GTP-dependent binding of aminoacyl-tRNA to the A-site of ribosomes during protein biosynthesis. The sequence is that of Elongation factor Tu from Rhodopseudomonas palustris (strain ATCC BAA-98 / CGA009).